A 269-amino-acid chain; its full sequence is Cytolethal distending toxin subunit B (269 aa).

Positions 1 to 18 (MKKYIISLIVFLSFYAQA) are cleaved as a signal peptide. The short motif at 195–210 (REPADLEMNLTVPVRR) is the Nuclear localization signal element.

As to quaternary structure, heterotrimer of 3 subunits, CdtA, CdtB and CdtC.

The protein resides in the secreted. In terms of biological role, part of the tripartite complex that is required for the CDT activity. CdtB exhibits a DNA-nicking endonuclease activity, and very probably causes DNA damage in intoxicated cells. This damage induces G2/M cell cycle arrest, chromatin fragmentation, cell distention and nucleus enlargement. The polypeptide is Cytolethal distending toxin subunit B (cdtB) (Escherichia coli).